A 216-amino-acid polypeptide reads, in one-letter code: 2',3'-cyclic-nucleotide 3'-phosphodiesterase (216 aa).

H39 (proton donor/acceptor) is an active-site residue. T41 serves as a coordination point for substrate. H137 functions as the Proton donor/acceptor in the catalytic mechanism. Residues S139 and Y142 each contribute to the substrate site.

This sequence belongs to the 2H phosphoesterase superfamily. CPD1 family.

Its subcellular location is the golgi apparatus. It catalyses the reaction a nucleoside 2',3'-cyclic phosphate + H2O = a nucleoside 2'-phosphate + H(+). Functionally, involved in the metabolism of ADP-ribose 1',2'-cyclic phosphate which is produced as a consequence of tRNA splicing. This is 2',3'-cyclic-nucleotide 3'-phosphodiesterase (CPD1) from Eremothecium gossypii (strain ATCC 10895 / CBS 109.51 / FGSC 9923 / NRRL Y-1056) (Yeast).